A 138-amino-acid chain; its full sequence is Putative pre-16S rRNA nuclease (138 aa).

This sequence belongs to the YqgF nuclease family.

It is found in the cytoplasm. Its function is as follows. Could be a nuclease involved in processing of the 5'-end of pre-16S rRNA. This is Putative pre-16S rRNA nuclease from Bacteroides fragilis (strain ATCC 25285 / DSM 2151 / CCUG 4856 / JCM 11019 / LMG 10263 / NCTC 9343 / Onslow / VPI 2553 / EN-2).